The sequence spans 329 residues: Phospho-N-acetylmuramoyl-pentapeptide-transferase (329 aa).

9 helical membrane-spanning segments follow: residues 1-21, 53-73, 76-96, 109-129, 141-161, 175-195, 198-218, 237-257, and 309-329; these read MLLN…IGIP, MGGF…ALVF, FSPA…IGFL, GLTA…SYFI, ILSW…IWLV, GLAS…AVVH, YDVL…FVFN, FLAI…IGAV, and IVFW…YFAF.

It belongs to the glycosyltransferase 4 family. MraY subfamily. The cofactor is Mg(2+).

The protein localises to the cell membrane. It catalyses the reaction UDP-N-acetyl-alpha-D-muramoyl-L-alanyl-gamma-D-glutamyl-L-lysyl-D-alanyl-D-alanine + di-trans,octa-cis-undecaprenyl phosphate = Mur2Ac(oyl-L-Ala-gamma-D-Glu-L-Lys-D-Ala-D-Ala)-di-trans,octa-cis-undecaprenyl diphosphate + UMP. It functions in the pathway cell wall biogenesis; peptidoglycan biosynthesis. Functionally, catalyzes the initial step of the lipid cycle reactions in the biosynthesis of the cell wall peptidoglycan: transfers peptidoglycan precursor phospho-MurNAc-pentapeptide from UDP-MurNAc-pentapeptide onto the lipid carrier undecaprenyl phosphate, yielding undecaprenyl-pyrophosphoryl-MurNAc-pentapeptide, known as lipid I. This chain is Phospho-N-acetylmuramoyl-pentapeptide-transferase, found in Lactococcus lactis subsp. cremoris (strain SK11).